The following is a 198-amino-acid chain: Glycerol-3-phosphate acyltransferase (198 aa).

6 helical membrane-spanning segments follow: residues 1–21 (MNLLILFFGYLFGSFPSGYLA), 55–75 (VFLLDVFKGVLSILLAKYLLL), 79–99 (WQVAVGLSTLIGHIWPVWLNW), 111–131 (IFLGLSWQVGLATLGVFIIMI), 136–156 (IVSLASVSASLALPLIMFLSF), and 158–178 (GSNLSLPFLIVSLLAMILVIW).

It belongs to the PlsY family. As to quaternary structure, probably interacts with PlsX.

The protein resides in the cell inner membrane. The catalysed reaction is an acyl phosphate + sn-glycerol 3-phosphate = a 1-acyl-sn-glycero-3-phosphate + phosphate. It participates in lipid metabolism; phospholipid metabolism. Functionally, catalyzes the transfer of an acyl group from acyl-phosphate (acyl-PO(4)) to glycerol-3-phosphate (G3P) to form lysophosphatidic acid (LPA). This enzyme utilizes acyl-phosphate as fatty acyl donor, but not acyl-CoA or acyl-ACP. In Prochlorococcus marinus (strain NATL2A), this protein is Glycerol-3-phosphate acyltransferase.